A 272-amino-acid chain; its full sequence is R-spondin-3 (272 aa).

The N-terminal stretch at M1 to S21 is a signal peptide. FU repeat units follow at residues P35–G86 and I92–A135. N-linked (GlcNAc...) asparagine glycosylation occurs at N36. 11 disulfides stabilise this stretch: C41-C48, C45-C54, C57-C76, C80-C95, C98-C105, C102-C111, C114-C125, C129-C142, C148-C190, C159-C166, and C199-C206. The TSP type-1 domain occupies H147 to Q207. Residues V201 to H272 form a disordered region. Over residues K213 to P223 the composition is skewed to basic residues. Positions N224–Q252 are enriched in basic and acidic residues.

The protein belongs to the R-spondin family. As to quaternary structure, interacts with the extracellular domain of FZD8 and LRP6. It however does not form a ternary complex with FZD8 and LRP6. Interacts with WNT1. Binds heparin. Interacts with LGR4, LGR5 and LGR6. In terms of tissue distribution, ubiquitously expressed. Expressed at higher level in placenta, small intestine, fetal thymus and lymph node. Highly expressed in endothelial cells.

The protein resides in the secreted. In terms of biological role, activator of the canonical Wnt signaling pathway by acting as a ligand for LGR4-6 receptors, which acts as a key regulator of angiogenesis. Upon binding to LGR4-6 (LGR4, LGR5 or LGR6), LGR4-6 associate with phosphorylated LRP6 and frizzled receptors that are activated by extracellular Wnt receptors, triggering the canonical Wnt signaling pathway to increase expression of target genes. Also regulates the canonical Wnt/beta-catenin-dependent pathway and non-canonical Wnt signaling by acting as an inhibitor of ZNRF3, an important regulator of the Wnt signaling pathway. Acts as a ligand for frizzled FZD8 and LRP6. May negatively regulate the TGF-beta pathway. Acts as a key regulator of angiogenesis by controlling vascular stability and pruning: acts by activating the non-canonical Wnt signaling pathway in endothelial cells. Can also amplify Wnt signaling pathway independently of LGR4-6 receptors, possibly by acting as a direct antagonistic ligand to RNF43 and ZNRF3. This is R-spondin-3 (RSPO3) from Homo sapiens (Human).